Reading from the N-terminus, the 243-residue chain is Probable flavin-dependent thymidylate synthase (243 aa).

The region spanning 21–239 (FEVDDFEESK…PNTYQDIPDV (219 aa)) is the ThyX domain. FAD-binding positions include serine 80 and 103-105 (RHR). DUMP contacts are provided by residues 100–103 (ELER), 113–115 (SQR), and arginine 178. The ThyX motif signature appears at 103–113 (RHRHLSFSVVS). 194–196 (NHR) lines the FAD pocket. Arginine 205 is a dUMP binding site. Catalysis depends on arginine 205, which acts as the Involved in ionization of N3 of dUMP, leading to its activation.

Belongs to the thymidylate synthase ThyX family. As to quaternary structure, homotetramer. Requires FAD as cofactor.

The enzyme catalyses dUMP + (6R)-5,10-methylene-5,6,7,8-tetrahydrofolate + NADPH + H(+) = dTMP + (6S)-5,6,7,8-tetrahydrofolate + NADP(+). The protein operates within pyrimidine metabolism; dTTP biosynthesis. Functionally, catalyzes the reductive methylation of 2'-deoxyuridine-5'-monophosphate (dUMP) to 2'-deoxythymidine-5'-monophosphate (dTMP) while utilizing 5,10-methylenetetrahydrofolate (mTHF) as the methyl donor, and NADPH and FADH(2) as the reductant. This is Probable flavin-dependent thymidylate synthase (48) from Mycobacterium phage L5 (Mycobacteriophage L5).